Consider the following 614-residue polypeptide: Dihydroxy-acid dehydratase 1 (614 aa).

Mg(2+) is bound at residue Asp81. Cys122 serves as a coordination point for [2Fe-2S] cluster. Mg(2+) is bound by residues Asp123 and Lys124. Lys124 carries the post-translational modification N6-carboxylysine. Cys195 contacts [2Fe-2S] cluster. Glu491 serves as a coordination point for Mg(2+). Residue Ser517 is the Proton acceptor of the active site.

This sequence belongs to the IlvD/Edd family. In terms of assembly, homodimer. [2Fe-2S] cluster serves as cofactor. Mg(2+) is required as a cofactor.

The enzyme catalyses (2R)-2,3-dihydroxy-3-methylbutanoate = 3-methyl-2-oxobutanoate + H2O. It catalyses the reaction (2R,3R)-2,3-dihydroxy-3-methylpentanoate = (S)-3-methyl-2-oxopentanoate + H2O. It functions in the pathway amino-acid biosynthesis; L-isoleucine biosynthesis; L-isoleucine from 2-oxobutanoate: step 3/4. Its pathway is amino-acid biosynthesis; L-valine biosynthesis; L-valine from pyruvate: step 3/4. Functions in the biosynthesis of branched-chain amino acids. Catalyzes the dehydration of (2R,3R)-2,3-dihydroxy-3-methylpentanoate (2,3-dihydroxy-3-methylvalerate) into 2-oxo-3-methylpentanoate (2-oxo-3-methylvalerate) and of (2R)-2,3-dihydroxy-3-methylbutanoate (2,3-dihydroxyisovalerate) into 2-oxo-3-methylbutanoate (2-oxoisovalerate), the penultimate precursor to L-isoleucine and L-valine, respectively. This is Dihydroxy-acid dehydratase 1 from Mesorhizobium japonicum (strain LMG 29417 / CECT 9101 / MAFF 303099) (Mesorhizobium loti (strain MAFF 303099)).